Here is a 464-residue protein sequence, read N- to C-terminus: ERO1-like protein alpha (464 aa).

Residues 1–23 (MGRAWGLLVGLLGVVWLLRLGHG) form the signal peptide. Cystine bridges form between Cys35-Cys48, Cys37-Cys46, Cys85-Cys387, Cys94-Cys99, Cys94-Cys130, Cys99-Cys104, Cys207-Cys237, and Cys390-Cys393. Residues Ser106, Ser142, and Ser144 each carry the phosphoserine modification. Arg186, Thr188, and Trp199 together coordinate FAD. The FAD site is built by Ser248 and His251. Asn276 carries N-linked (GlcNAc...) asparagine glycosylation. 2 residues coordinate FAD: Arg283 and Arg296. N-linked (GlcNAc...) asparagine glycosylation is present at Asn380.

It belongs to the EROs family. Predominantly monomer. May function both as a monomer and a homodimer. Interacts with PDILT. Interacts with ERP44; the interaction results in retention of ERO1A in the endoplasmic reticulum. Requires FAD as cofactor. N-glycosylated. In terms of processing, the Cys-94/Cys-99 and Cys-390/Cys-393 disulfide bonds constitute the redox-active center. The Cys-94/Cys-99 disulfide bond may accept electron from P4HB and funnel them to the active site disulfide Cys-390/Cys-393. The regulatory Cys-99/Cys-104 disulfide bond stabilizes the other regulatory bond Cys-94/Cys-130. Post-translationally, phosphorylated on Ser-144 by FAM20C in the Golgi which increases its enzymatic activity. Phosphorylation is induced by lactation. It is also induced by hypoxia and reductive stress. In terms of tissue distribution, widely expressed (at protein level). In the mammary gland, expressed at higher levels in lactating mice than in virgin mice (at protein level).

Its subcellular location is the endoplasmic reticulum membrane. It localises to the golgi apparatus lumen. The protein localises to the secreted. It is found in the cell projection. The protein resides in the dendrite. Enzyme activity is tightly regulated to prevent the accumulation of reactive oxygen species in the endoplasmic reticulum. Reversibly down-regulated by the formation of disulfide bonds between the active site Cys-94 and Cys-130, and between Cys-99 and Cys-104. Glutathione may be required to regulate its activity in the endoplasmic reticulum. In terms of biological role, oxidoreductase involved in disulfide bond formation in the endoplasmic reticulum. Efficiently reoxidizes P4HB/PDI, the enzyme catalyzing protein disulfide formation, in order to allow P4HB to sustain additional rounds of disulfide formation. Following P4HB reoxidation, passes its electrons to molecular oxygen via FAD, leading to the production of reactive oxygen species (ROS) in the cell. Required for the proper folding of immunoglobulins. Plays an important role in ER stress-induced, CHOP-dependent apoptosis by activating the inositol 1,4,5-trisphosphate receptor IP3R1. In Mus musculus (Mouse), this protein is ERO1-like protein alpha.